A 530-amino-acid chain; its full sequence is Inactive ubiquitin carboxyl-terminal hydrolase 17-like protein 7 (530 aa).

Residues 80 to 375 form the USP domain; the sequence is AGLQKIGNTF…QAYVLFYIQK (296 aa). Residues 382-392 are compositionally biased toward basic and acidic residues; it reads SESVSRGREPR. Disordered stretches follow at residues 382 to 412, 431 to 454, and 490 to 530; these read SESVSRGREPRALGAEDTDRPATQGELKRDH, ESTLDHWKFPQEQNKTKPEFNVRK, and SSTK…LVCQ. The segment covering 490-512 has biased composition (polar residues); it reads SSTKPTDQESMNTGTLASLQGST. The segment covering 513-524 has biased composition (basic residues); it reads RRSKGNNKHSKR.

It belongs to the peptidase C19 family. USP17 subfamily.

The protein localises to the nucleus. The protein resides in the endoplasmic reticulum. The sequence is that of Inactive ubiquitin carboxyl-terminal hydrolase 17-like protein 7 (USP17L7) from Homo sapiens (Human).